The chain runs to 215 residues: Probable transaldolase (215 aa).

Lysine 83 serves as the catalytic Schiff-base intermediate with substrate.

This sequence belongs to the transaldolase family. Type 3B subfamily.

The protein localises to the cytoplasm. The enzyme catalyses D-sedoheptulose 7-phosphate + D-glyceraldehyde 3-phosphate = D-erythrose 4-phosphate + beta-D-fructose 6-phosphate. It participates in carbohydrate degradation; pentose phosphate pathway; D-glyceraldehyde 3-phosphate and beta-D-fructose 6-phosphate from D-ribose 5-phosphate and D-xylulose 5-phosphate (non-oxidative stage): step 2/3. Functionally, transaldolase is important for the balance of metabolites in the pentose-phosphate pathway. The chain is Probable transaldolase from Clostridium perfringens (strain SM101 / Type A).